The sequence spans 196 residues: Corticoliberin (196 aa).

The signal sequence occupies residues 1-24; sequence MRLPLLLSAGVLLVVSLPCPPCRA. A propeptide spanning residues 25–153 is cleaved from the precursor; that stretch reads LLSRGPIPGA…RQETPERERR (129 aa). The tract at residues 122 to 158 is disordered; the sequence is PRRQLDSPAGPAERGEENALGSRQETPERERRSEEPP. The span at 146–156 shows a compositional bias: basic and acidic residues; that stretch reads ETPERERRSEE. Isoleucine 194 carries the isoleucine amide modification.

This sequence belongs to the sauvagine/corticotropin-releasing factor/urotensin I family. In terms of assembly, interacts (via C-terminus) with CRFR1 (via N-terminal extracellular domain). Produced by the hypothalamus.

Its subcellular location is the secreted. Hormone regulating the release of corticotropin from pituitary gland. Induces NLRP6 in intestinal epithelial cells, hence may influence gut microbiota profile. The chain is Corticoliberin (CRH) from Canis lupus familiaris (Dog).